The chain runs to 295 residues: Nucleotide-binding protein YjiE (295 aa).

Gly12–Thr19 contributes to the ATP binding site. Asp63 to Ser66 contacts GTP.

It belongs to the RapZ-like family.

Functionally, displays ATPase and GTPase activities. In Lactococcus lactis subsp. lactis (strain IL1403) (Streptococcus lactis), this protein is Nucleotide-binding protein YjiE (yjiE).